Here is a 331-residue protein sequence, read N- to C-terminus: MNTTNILLLCGGGSSEHEVSIVSANYLFEQLNSVTDFNVVRVEIKNEGWCLDSGELVYLDINDQTLRGDNLESKVDFIVPCIHGFPGETGDIQSLFEMAKIPYLGCGSEASNNSFNKITSKLWYDALGIPNTPYLFLSDNTEQAHAQATQAFESWGKVFVKAARQGSSVGCYQVNQVEELSEAINKAFTFSDQVLIEKSVVPRELEVAAYEIDGELQISKPGEVIAPNGAFYSYEEKYSADSHSITEVEATNLTDEQRELIADSARKVFTQMKLRHLSRIDFFLTQDNEIYLNEVNTFPGMTPISMFPKMVEHDGHKFSQFLENCVRTSIS.

In terms of domain architecture, ATP-grasp spans 121–327 (KLWYDALGIP…FSQFLENCVR (207 aa)). 151–206 (AFESWGKVFVKAARQGSSVGCYQVNQVEELSEAINKAFTFSDQVLIEKSVVPRELE) provides a ligand contact to ATP. Residues Asp281, Glu294, and Asn296 each contribute to the Mg(2+) site.

It belongs to the D-alanine--D-alanine ligase family. Requires Mg(2+) as cofactor. Mn(2+) serves as cofactor.

The protein resides in the cytoplasm. It catalyses the reaction 2 D-alanine + ATP = D-alanyl-D-alanine + ADP + phosphate + H(+). It functions in the pathway cell wall biogenesis; peptidoglycan biosynthesis. Cell wall formation. This chain is D-alanine--D-alanine ligase, found in Vibrio atlanticus (strain LGP32) (Vibrio splendidus (strain Mel32)).